The sequence spans 459 residues: Putative flavin-containing monooxygenase 2 (459 aa).

FAD-binding positions include 17-21 (GAGVS), Glu38, and 46-47 (VW). Position 217–220 (217–220 (SAID)) interacts with NADP(+).

The protein belongs to the FMO family. FAD is required as a cofactor.

This is Putative flavin-containing monooxygenase 2 (FMO2) from Arabidopsis thaliana (Mouse-ear cress).